The sequence spans 149 residues: Large ribosomal subunit protein bL9 (149 aa).

Belongs to the bacterial ribosomal protein bL9 family.

Its function is as follows. Binds to the 23S rRNA. The chain is Large ribosomal subunit protein bL9 from Anaeromyxobacter dehalogenans (strain 2CP-1 / ATCC BAA-258).